Here is a 431-residue protein sequence, read N- to C-terminus: Asparagine--tRNA ligase (431 aa).

The protein belongs to the class-II aminoacyl-tRNA synthetase family.

It localises to the cytoplasm. The enzyme catalyses tRNA(Asn) + L-asparagine + ATP = L-asparaginyl-tRNA(Asn) + AMP + diphosphate + H(+). The sequence is that of Asparagine--tRNA ligase from Thermococcus kodakarensis (strain ATCC BAA-918 / JCM 12380 / KOD1) (Pyrococcus kodakaraensis (strain KOD1)).